A 505-amino-acid chain; its full sequence is Proton-coupled zinc antiporter SLC30A1 (505 aa).

Residues 1–10 (MGCWGRNRGR) are Cytoplasmic-facing. The chain crosses the membrane as a helical span at residues 11–31 (LLCMLALTFMFMVLEVVVSRV). The Extracellular portion of the chain corresponds to 32-35 (TSSL). The chain crosses the membrane as a helical span at residues 36 to 56 (AMLSDSFHMLSDVLALVVALV). Residues His-43 and Asp-47 each contribute to the Zn(2+) site. The Cytoplasmic segment spans residues 57-80 (AERFARRTHATQKNTFGWIRAEVM). The helical transmembrane segment at 81–101 (GALVNAIFLTGLCFAILLEAI) threads the bilayer. At 102-113 (ERFVEPHEMQQP) the chain is on the extracellular side. A helical membrane pass occupies residues 114 to 134 (LVVLGVGVAGLLVNVLGLCLF). The Cytoplasmic portion of the chain corresponds to 135–246 (HHHSGFSQDS…RAGQLNMRGV (112 aa)). Positions 142–215 (QDSGHSHSHG…DPEKPRSGDT (74 aa)) are disordered. Over residues 187–199 (TNTLVANTSNSNG) the composition is skewed to polar residues. The span at 203-214 (DPADPEKPRSGD) shows a compositional bias: basic and acidic residues. The helical transmembrane segment at 247-267 (FLHVLGDALGSVIVVVNALVF) threads the bilayer. The Zn(2+) site is built by His-249 and Asp-253. Residues 268-306 (YFSWKGCSEGDFCVNPCFPDPCKAFVEIINSTHASVYEA) lie on the Extracellular side of the membrane. The N-linked (GlcNAc...) asparagine glycan is linked to Asn-297. Residues 307–327 (GPCWVLYLDPTLCVVMVCILL) form a helical membrane-spanning segment. Topologically, residues 328 to 505 (YTTYPLLKES…MPNKQPESSL (178 aa)) are cytoplasmic. Position 504 is a phosphoserine (Ser-504).

The protein belongs to the cation diffusion facilitator (CDF) transporter (TC 2.A.4) family. SLC30A subfamily. In terms of assembly, homodimer. Interacts with TMEM163. Interacts and forms a complex with TMC6 and TMC8; the interaction regulates zinc transport into the ER.

The protein resides in the cell membrane. The protein localises to the basolateral cell membrane. It is found in the cytoplasmic vesicle membrane. Its subcellular location is the cytoplasm. It localises to the endoplasmic reticulum membrane. The protein resides in the golgi apparatus membrane. The protein localises to the nucleus membrane. The catalysed reaction is Zn(2+)(in) + 2 H(+)(out) = Zn(2+)(out) + 2 H(+)(in). Its function is as follows. Zinc ion:proton antiporter that could function at the plasma membrane mediating zinc efflux from cells against its electrochemical gradient protecting them from intracellular zinc accumulation and toxicity. Alternatively, could prevent the transport to the plasma membrane of CACNB2, the L-type calcium channels regulatory subunit, through a yet to be defined mechanism. By modulating the expression of these channels at the plasma membrane, could prevent calcium and zinc influx into cells. By the same mechanism, could also prevent L-type calcium channels-mediated heavy metal influx into cells. In some cells, could also function as a zinc ion:proton antiporter mediating zinc entry into the lumen of cytoplasmic vesicles. In macrophages, can increase zinc ions concentration into the lumen of cytoplasmic vesicles containing engulfed bacteria and could help inactivate them. Forms a complex with TMC6/EVER1 and TMC8/EVER2 at the ER membrane of keratynocytes which facilitates zinc uptake into the ER. Down-regulates the activity of transcription factors induced by zinc and cytokines. This chain is Proton-coupled zinc antiporter SLC30A1, found in Macaca fascicularis (Crab-eating macaque).